A 119-amino-acid chain; its full sequence is Large ribosomal subunit protein bL20 (119 aa).

It belongs to the bacterial ribosomal protein bL20 family.

In terms of biological role, binds directly to 23S ribosomal RNA and is necessary for the in vitro assembly process of the 50S ribosomal subunit. It is not involved in the protein synthesizing functions of that subunit. The polypeptide is Large ribosomal subunit protein bL20 (Burkholderia cenocepacia (strain HI2424)).